The sequence spans 85 residues: Arminin 6494 (85 aa).

An N-terminal signal peptide occupies residues 1–18; that stretch reads MKTVFAILFLAFIALTYA. Residues 19–57 constitute a propeptide that is removed on maturation; the sequence is RSYEDVKEEIKNEVEKEILEDLEEESDELNDKRKEINDA. Residue alanine 82 is modified to Alanine amide.

Belongs to the arminin family. As to expression, expressed in entodermal epithelium along the body column.

The protein resides in the secreted. Its subcellular location is the target cell membrane. Functionally, antimicrobial peptide with a broad-spectrum antimicrobial activity. Keeps its antibacterial activity under a wide range of salt concentrations that mimic physiological conditions of human blood, which is surprising, since Hydra is an obligate freshwater animal with nearly no salt tolerance. Does not affect red blood cells. This Hydra vulgaris (Hydra) protein is Arminin 6494.